We begin with the raw amino-acid sequence, 588 residues long: Urease subunit alpha (588 aa).

Residues 149–588 enclose the Urease domain; it reads GGIDTHIHFI…LPMAQRYFLF (440 aa). Ni(2+)-binding residues include His-154, His-156, and Lys-237. Lys-237 carries the post-translational modification N6-carboxylysine. Substrate is bound at residue His-239. The Ni(2+) site is built by His-266 and His-292. Catalysis depends on His-340, which acts as the Proton donor. Asp-380 contributes to the Ni(2+) binding site.

Belongs to the metallo-dependent hydrolases superfamily. Urease alpha subunit family. In terms of assembly, heterotrimer of UreA (gamma), UreB (beta) and UreC (alpha) subunits. Three heterotrimers associate to form the active enzyme. Requires Ni cation as cofactor. Carboxylation allows a single lysine to coordinate two nickel ions.

It is found in the cytoplasm. The catalysed reaction is urea + 2 H2O + H(+) = hydrogencarbonate + 2 NH4(+). It functions in the pathway nitrogen metabolism; urea degradation; CO(2) and NH(3) from urea (urease route): step 1/1. In Opitutus terrae (strain DSM 11246 / JCM 15787 / PB90-1), this protein is Urease subunit alpha.